The chain runs to 753 residues: Neuroendocrine convertase 1 (753 aa).

The first 27 residues, M1–A27, serve as a signal peptide directing secretion. Positions K28–R110 are excised as a propeptide. The 322-residue stretch at Q129–V450 folds into the Peptidase S8 domain. Residues D167 and H208 each act as charge relay system in the active site. 2 cysteine pairs are disulfide-bonded: C225–C374 and C317–C347. Residue S382 is the Charge relay system of the active site. N-linked (GlcNAc...) asparagine glycosylation occurs at N401. Positions N460–Q597 constitute a P/Homo B domain. A disulfide bridge links C467 with C494. Over residues Q633 to V651 the composition is skewed to polar residues. The interval Q633–P663 is disordered. N645 carries an N-linked (GlcNAc...) asparagine glycan.

Belongs to the peptidase S8 family. Furin subfamily. The cofactor is Ca(2+).

It is found in the cytoplasmic vesicle. Its subcellular location is the secretory vesicle. It carries out the reaction Release of protein hormones, neuropeptides and renin from their precursors, generally by hydrolysis of -Lys-Arg-|- bonds.. Its function is as follows. Involved in the processing of hormone and other protein precursors at sites comprised of pairs of basic amino acid residues. Substrates include POMC, renin, enkephalin, dynorphin, somatostatin, insulin and AGRP. This Mus cookii (Cook's mouse) protein is Neuroendocrine convertase 1 (Pcsk1).